Consider the following 668-residue polypeptide: UvrABC system protein B (668 aa).

Residues 25–414 (RGLHAGARFQ…IVEQLIRPTG (390 aa)) form the Helicase ATP-binding domain. 38-45 (GVTGSGKT) is an ATP binding site. The short motif at 91–114 (YYDYYQPESYVPARDLYIEKDASI) is the Beta-hairpin element. In terms of domain architecture, Helicase C-terminal spans 431–594 (DICQRVKACS…TIKKSIEDIL (164 aa)). A UVR domain is found at 627–662 (KKMVQALRLHMKVCARELRFEEAALIRDKILQLQRQ).

It belongs to the UvrB family. Forms a heterotetramer with UvrA during the search for lesions. Interacts with UvrC in an incision complex.

Its subcellular location is the cytoplasm. In terms of biological role, the UvrABC repair system catalyzes the recognition and processing of DNA lesions. A damage recognition complex composed of 2 UvrA and 2 UvrB subunits scans DNA for abnormalities. Upon binding of the UvrA(2)B(2) complex to a putative damaged site, the DNA wraps around one UvrB monomer. DNA wrap is dependent on ATP binding by UvrB and probably causes local melting of the DNA helix, facilitating insertion of UvrB beta-hairpin between the DNA strands. Then UvrB probes one DNA strand for the presence of a lesion. If a lesion is found the UvrA subunits dissociate and the UvrB-DNA preincision complex is formed. This complex is subsequently bound by UvrC and the second UvrB is released. If no lesion is found, the DNA wraps around the other UvrB subunit that will check the other stand for damage. The sequence is that of UvrABC system protein B from Treponema pallidum (strain Nichols).